The primary structure comprises 205 residues: Holliday junction branch migration complex subunit RuvA (205 aa).

A domain I region spans residues 1-65 (MIGRLRGAVA…SAGLRLYGFL (65 aa)). Residues 66–144 (TREDRRAFVL…TDGPVLMSAP (79 aa)) are domain II. Residues 145–153 (TSSAPSAPA) are flexible linker. The tract at residues 153 to 205 (AKPAPTGDAVAALMGLGVAEVNARRVVEAAAAELGEEATVQALIKAGLKELGR) is domain III.

Belongs to the RuvA family. In terms of assembly, homotetramer. Forms an RuvA(8)-RuvB(12)-Holliday junction (HJ) complex. HJ DNA is sandwiched between 2 RuvA tetramers; dsDNA enters through RuvA and exits via RuvB. An RuvB hexamer assembles on each DNA strand where it exits the tetramer. Each RuvB hexamer is contacted by two RuvA subunits (via domain III) on 2 adjacent RuvB subunits; this complex drives branch migration. In the full resolvosome a probable DNA-RuvA(4)-RuvB(12)-RuvC(2) complex forms which resolves the HJ.

The protein localises to the cytoplasm. Its function is as follows. The RuvA-RuvB-RuvC complex processes Holliday junction (HJ) DNA during genetic recombination and DNA repair, while the RuvA-RuvB complex plays an important role in the rescue of blocked DNA replication forks via replication fork reversal (RFR). RuvA specifically binds to HJ cruciform DNA, conferring on it an open structure. The RuvB hexamer acts as an ATP-dependent pump, pulling dsDNA into and through the RuvAB complex. HJ branch migration allows RuvC to scan DNA until it finds its consensus sequence, where it cleaves and resolves the cruciform DNA. In Caulobacter vibrioides (strain ATCC 19089 / CIP 103742 / CB 15) (Caulobacter crescentus), this protein is Holliday junction branch migration complex subunit RuvA.